Here is a 179-residue protein sequence, read N- to C-terminus: Isopentenyl-diphosphate Delta-isomerase (179 aa).

His-24 and His-30 together coordinate Mn(2+). The 133-residue stretch at 28–160 (LLHRAFSIFI…PEKFTVWFLT (133 aa)) folds into the Nudix hydrolase domain. Cys-65 is a catalytic residue. His-67 serves as a coordination point for Mn(2+). Glu-85 lines the Mg(2+) pocket. Residues Glu-110 and Glu-112 each coordinate Mn(2+). The active site involves Glu-112.

It belongs to the IPP isomerase type 1 family. Homodimer. Requires Mg(2+) as cofactor. It depends on Mn(2+) as a cofactor.

It is found in the cytoplasm. It carries out the reaction isopentenyl diphosphate = dimethylallyl diphosphate. It functions in the pathway isoprenoid biosynthesis; dimethylallyl diphosphate biosynthesis; dimethylallyl diphosphate from isopentenyl diphosphate: step 1/1. In terms of biological role, catalyzes the 1,3-allylic rearrangement of the homoallylic substrate isopentenyl (IPP) to its highly electrophilic allylic isomer, dimethylallyl diphosphate (DMAPP). The polypeptide is Isopentenyl-diphosphate Delta-isomerase (Serratia proteamaculans (strain 568)).